The primary structure comprises 338 residues: tRNA-specific 2-thiouridylase MnmA (338 aa).

Residues 6–13 (AMSGGVDS) and methionine 32 contribute to the ATP site. Catalysis depends on cysteine 92, which acts as the Nucleophile. A disulfide bridge links cysteine 92 with cysteine 186. Glycine 116 contributes to the ATP binding site. Residues 134–136 (KDQ) form an interaction with tRNA region. The Cysteine persulfide intermediate role is filled by cysteine 186. Positions 288–289 (RY) are interaction with tRNA.

This sequence belongs to the MnmA/TRMU family.

The protein localises to the cytoplasm. The catalysed reaction is S-sulfanyl-L-cysteinyl-[protein] + uridine(34) in tRNA + AH2 + ATP = 2-thiouridine(34) in tRNA + L-cysteinyl-[protein] + A + AMP + diphosphate + H(+). Functionally, catalyzes the 2-thiolation of uridine at the wobble position (U34) of tRNA, leading to the formation of s(2)U34. The polypeptide is tRNA-specific 2-thiouridylase MnmA (Campylobacter jejuni subsp. jejuni serotype O:6 (strain 81116 / NCTC 11828)).